We begin with the raw amino-acid sequence, 176 residues long: ATP-dependent protease subunit HslV (176 aa).

The active site involves Thr-2. Na(+) is bound by residues Gly-157, Cys-160, and Thr-163.

Belongs to the peptidase T1B family. HslV subfamily. As to quaternary structure, a double ring-shaped homohexamer of HslV is capped on each side by a ring-shaped HslU homohexamer. The assembly of the HslU/HslV complex is dependent on binding of ATP.

Its subcellular location is the cytoplasm. The enzyme catalyses ATP-dependent cleavage of peptide bonds with broad specificity.. Allosterically activated by HslU binding. Its function is as follows. Protease subunit of a proteasome-like degradation complex believed to be a general protein degrading machinery. The protein is ATP-dependent protease subunit HslV of Escherichia coli O139:H28 (strain E24377A / ETEC).